The following is a 226-amino-acid chain: MEPGFWHSKWDTQQIGFHQNEVNPLLIKYWPRLNLNNLVNTSVFVPLCGKTLDICFLAELGHEVIGCELNETAVEHFFTENDLSYSTSRVGELQKFATEQVSIYQGDLFSLSHEALSSQEHRTIGAFYDRAALIAWPEEMRQDYVQKLAALIPPKSIGLLVTLDYPQEALKGPPFAVSNDWIMANMAEFFEVEILSCEDVLSENPRFIKKEVPWLTESVYRLIRRG.

Positions 10, 47, 68, and 130 each coordinate S-adenosyl-L-methionine.

Belongs to the class I-like SAM-binding methyltransferase superfamily. TPMT family.

Its subcellular location is the cytoplasm. It carries out the reaction S-adenosyl-L-methionine + a thiopurine = S-adenosyl-L-homocysteine + a thiopurine S-methylether.. This is Thiopurine S-methyltransferase from Shewanella sediminis (strain HAW-EB3).